The chain runs to 436 residues: Envelope glycoprotein (436 aa).

Met1 is a signal peptide. Over 2 to 436 (ANPSPHQIYN…GGLTVGGIAA (435 aa)) the chain is Extracellular. N-linked (GlcNAc...) asparagine; by host glycosylation is found at Asn11 and Asn26. 2 disulfide bridges follow: Cys95–Cys117 and Cys109–Cys122. Positions 203 to 255 (PPQAMGPNLVLPDQKPPSRQSQTGSKVATQRPQTNESAPRSVGPTTMGPKRIG) are disordered. Residues 219–240 (PSRQSQTGSKVATQRPQTNESA) show a composition bias toward polar residues. Asn237, Asn272, and Asn277 each carry an N-linked (GlcNAc...) asparagine; by host glycan. A CXXC motif is present at residues 282–285 (CWLC). N-linked (GlcNAc...) asparagine; by host glycans are attached at residues Asn304, Asn344, Asn360, and Asn380.

In terms of assembly, the mature envelope protein (Env) consists of a trimer of SU-TM heterodimers attached by a labile interchain disulfide bond. Specific enzymatic cleavages in vivo yield mature proteins. Envelope glycoproteins are synthesized as an inactive precursor that is N-glycosylated and processed likely by host cell furin or by a furin-like protease in the Golgi to yield the mature SU and TM proteins. The cleavage site between SU and TM requires the minimal sequence [KR]-X-[KR]-R.

It is found in the virion membrane. It localises to the host cell membrane. In terms of biological role, the surface protein (SU) attaches the virus to the host cell by binding to its receptor. This interaction triggers the refolding of the transmembrane protein (TM) and is thought to activate its fusogenic potential by unmasking its fusion peptide. Fusion occurs at the host cell plasma membrane. Its function is as follows. The transmembrane protein (TM) acts as a class I viral fusion protein. Under the current model, the protein has at least 3 conformational states: pre-fusion native state, pre-hairpin intermediate state, and post-fusion hairpin state. During viral and target cell membrane fusion, the coiled coil regions (heptad repeats) assume a trimer-of-hairpins structure, positioning the fusion peptide in close proximity to the C-terminal region of the ectodomain. The formation of this structure appears to drive apposition and subsequent fusion of viral and target cell membranes. Membranes fusion leads to delivery of the nucleocapsid into the cytoplasm. The sequence is that of Envelope glycoprotein from Feline leukemia virus (strain C/FS246).